Consider the following 332-residue polypeptide: Flotillin-like protein FloA (332 aa).

Residues 9-29 traverse the membrane as a helical segment; sequence FILIGGGIIFVVLFFHYVPFF.

Belongs to the flotillin-like FloA family. In terms of assembly, homooligomerizes.

It localises to the cell membrane. It is found in the membrane raft. Functionally, found in functional membrane microdomains (FMM) that may be equivalent to eukaryotic membrane rafts. FMMs are highly dynamic and increase in number as cells age. Flotillins are thought to be important factors in membrane fluidity. In Phocaeicola vulgatus (strain ATCC 8482 / DSM 1447 / JCM 5826 / CCUG 4940 / NBRC 14291 / NCTC 11154) (Bacteroides vulgatus), this protein is Flotillin-like protein FloA.